We begin with the raw amino-acid sequence, 348 residues long: Large ribosomal subunit protein uL3m (348 aa).

The N-terminal 40 residues, 1–40 (MPGWRLLAQAGARVLGCGARGLGADPGLERRKNILFFVRN), are a transit peptide targeting the mitochondrion.

This sequence belongs to the universal ribosomal protein uL3 family. Component of the mitochondrial ribosome large subunit (39S) which comprises a 16S rRNA and about 50 distinct proteins.

It is found in the mitochondrion. The polypeptide is Large ribosomal subunit protein uL3m (Mrpl3) (Mus musculus (Mouse)).